Reading from the N-terminus, the 971-residue chain is Reversion-inducing cysteine-rich protein with Kazal motifs (971 aa).

The N-terminal stretch at 1–22 (MASVRASPRSALLLLLAAAGVA) is a signal peptide. Residues 37-84 (CCNHSKDNQMCRDVCEQIFSSKSESRLKHLLQRAPDYCPETMVEIWSC) form a Knot 1 repeat. The interval 37–338 (CCNHSKDNQM…NPVEVSMLTC (302 aa)) is 5 X Knot repeats. Residues asparagine 39 and asparagine 86 are each glycosylated (N-linked (GlcNAc...) asparagine). Knot repeat units follow at residues 104–141 (CCEL…LFSC) and 151–197 (CCSY…LIHC). Asparagine 200 is a glycosylation site (N-linked (GlcNAc...) asparagine). Knot repeat units lie at residues 216-263 (CCDR…LWQC) and 292-338 (CCSK…MLTC). 2 N-linked (GlcNAc...) asparagine glycosylation sites follow: asparagine 297 and asparagine 352. 3 Kazal-like domains span residues 627–673 (TFTG…PCIS), 698–752 (TFDK…PCQP), and 753–789 (FCRA…PCQA). 6 cysteine pairs are disulfide-bonded: cysteine 633–cysteine 658, cysteine 635–cysteine 654, cysteine 643–cysteine 671, cysteine 716–cysteine 735, cysteine 724–cysteine 750, and cysteine 761–cysteine 787. The region spanning 704-750 (CSQYECVPRQLTCDQARDPVCDTDHMEHSNLCTLYQRGKSLSYRGPC) is the Kazal-like 2; degenerate domain. A lipid anchor (GPI-anchor amidated serine) is attached at serine 942. A propeptide spans 943 to 971 (SAVVGRPLFHSLLLLLSLGLTVHLLWTRP) (removed in mature form).

It belongs to the RECK family. Interacts (via knot repeats) with WNT7A (via disordered linker region); the interaction is direct. Interacts (via knot repeats) with WNT7B (via disordered linker region); the interaction is direct. Interacts with ADGRA2; the interaction is direct. Interacts with MMP9.

The protein resides in the cell membrane. Functions together with ADGRA2 to enable brain endothelial cells to selectively respond to Wnt7 signals (WNT7A or WNT7B). Plays a key role in Wnt7-specific responses: required for central nervous system (CNS) angiogenesis and blood-brain barrier regulation. Acts as a Wnt7-specific coactivator of canonical Wnt signaling by decoding Wnt ligands: acts by interacting specifically with the disordered linker region of Wnt7, thereby conferring ligand selectivity for Wnt7. ADGRA2 is then required to deliver RECK-bound Wnt7 to frizzled by assembling a higher-order RECK-ADGRA2-Fzd-LRP5-LRP6 complex. Also acts as a serine protease inhibitor: negatively regulates matrix metalloproteinase-9 (MMP9) by suppressing MMP9 secretion and by direct inhibition of its enzymatic activity. Also inhibits metalloproteinase activity of MMP2 and MMP14 (MT1-MMP). The polypeptide is Reversion-inducing cysteine-rich protein with Kazal motifs (Mus musculus (Mouse)).